Consider the following 381-residue polypeptide: Protein RecA (381 aa).

79 to 86 is an ATP binding site; the sequence is GPESSGKT.

This sequence belongs to the RecA family.

The protein localises to the cytoplasm. Functionally, can catalyze the hydrolysis of ATP in the presence of single-stranded DNA, the ATP-dependent uptake of single-stranded DNA by duplex DNA, and the ATP-dependent hybridization of homologous single-stranded DNAs. It interacts with LexA causing its activation and leading to its autocatalytic cleavage. This chain is Protein RecA, found in Streptococcus parasanguinis.